Reading from the N-terminus, the 125-residue chain is uncharacterized protein (125 aa).

This is an uncharacterized protein from Mycoplasma (Bacteriophage L2).